The sequence spans 246 residues: Eukaryotic translation initiation factor 6 (246 aa).

This sequence belongs to the eIF-6 family. In terms of assembly, monomer. Associates with the 60S ribosomal subunit.

The protein resides in the cytoplasm. The protein localises to the nucleus. Its subcellular location is the nucleolus. Its function is as follows. Binds to the 60S ribosomal subunit and prevents its association with the 40S ribosomal subunit to form the 80S initiation complex in the cytoplasm. May also be involved in ribosome biogenesis. Involved in miRNA-mediated gene silencing. This Caenorhabditis elegans protein is Eukaryotic translation initiation factor 6.